We begin with the raw amino-acid sequence, 801 residues long: Na(+)/H(+) antiporter subunit A1 (801 aa).

Transmembrane regions (helical) follow at residues 4–25 (LHIAVILPLIFALIIPILYRFF), 30–49 (LGWFVLPVPIVIFIYMLTLI), 79–101 (LGLLFSLLISGIGSLVVLYSIGY), 108–127 (LGNFYCYLLLFMGAMLGVVL), 131–153 (VIILYLFWELTSFSSFLLISFWR), 166–188 (LIITVFGGLSLLGGIILLAIPTQ), 208–230 (FIFAMILIMIGAFTKSAQFPFYI), 243–265 (SAYLHSATMVKAGLYLIARMTPI), 270–289 (QGWIWTVTLVGLITLFWASL), 302–324 (AFSTVSQLGMIMAMLGIGAISYH), 339–361 (AAIFHLINHATFKGALFMITGAV), 373–395 (LGGLLTIMPISFTITVITALSMA), 429–451 (YLFPIIGIVGSVFTFVYSIKFIM), 472–494 (ILMLLSPAILATLVIVFGLFPGI), 526–548 (AFLSTLVIYILGILLIVTFSYWV), 589–611 (NNLVIIFGALILLTFVTVFSVPF), 621–641 (IRIFEVCIVILLLSAAFLILF), 646–668 (LFSIIMLSAVGYAVSVLFIFFKA), 672–694 (ALTQFVVESISTALFLLCFYHLP), 707–729 (LTNALIAGGVGLSVIIIGLIAYG), and 767–784 (LFESSVLGIAGLAVYTMI).

The protein belongs to the CPA3 antiporters (TC 2.A.63) subunit A family. May form a heterooligomeric complex that consists of seven subunits: mnhA1, mnhB1, mnhC1, mnhD1, mnhE1, mnhF1 and mnhG1.

It is found in the cell membrane. Na(+) extrusion is completely inhibited by the H(+) conductor carbonyl cyanide m-chlorophenylhydrazone (CCCP). Functionally, mnh complex is a Na(+)/H(+) antiporter involved in Na(+) excretion. In Staphylococcus aureus (strain MRSA252), this protein is Na(+)/H(+) antiporter subunit A1 (mnhA1).